Reading from the N-terminus, the 184-residue chain is Large ribosomal subunit protein uL5c (184 aa).

It belongs to the universal ribosomal protein uL5 family. Part of the 50S ribosomal subunit; contacts the 5S rRNA.

The protein localises to the plastid. The protein resides in the chloroplast. Its function is as follows. Binds 5S rRNA, forms part of the central protuberance of the 50S subunit. The polypeptide is Large ribosomal subunit protein uL5c (rpl5) (Zygnema circumcarinatum (Green alga)).